Reading from the N-terminus, the 114-residue chain is Putative small ubiquitin-related modifier 4 (114 aa).

The tract at residues 1–20 (MSTTSRVGSNEVKMEGQKRK) is disordered. Residues 26–104 (THVTLKVKGQ…IDAMLCQQSG (79 aa)) form the Ubiquitin-like domain. Gly-104 is covalently cross-linked (Glycyl lysine isopeptide (Gly-Lys) (interchain with K-? in acceptor proteins)).

This sequence belongs to the ubiquitin family. SUMO subfamily. Interacts with SAE2, SCE1, SIZ1 and MMS21 Covalently attached to a number of proteins.

The protein resides in the nucleus. Its subcellular location is the cytoplasm. In terms of biological role, ubiquitin-like protein which can be covalently attached to target lysines as a monomer. Does not seem to be involved in protein degradation and may function as an antagonist of ubiquitin in the degradation process. The sequence is that of Putative small ubiquitin-related modifier 4 (SUMO4) from Arabidopsis thaliana (Mouse-ear cress).